Here is a 388-residue protein sequence, read N- to C-terminus: FBD-associated F-box protein At5g60610 (388 aa).

The region spanning 1–47 (MDRISGLPDELLVKIISFVPTKVAVSTSILSKRWESLWKWVPKLECD) is the F-box domain. Residues 337 to 388 (NWKNIQRSVPKCLKSSLKTLEFAGYTARPEERDFLSFIFKKARCLKTSSISH) enclose the FBD domain.

The protein is FBD-associated F-box protein At5g60610 of Arabidopsis thaliana (Mouse-ear cress).